Consider the following 254-residue polypeptide: Triosephosphate isomerase (254 aa).

Substrate is bound at residue 9 to 11; it reads NWK. Catalysis depends on histidine 98, which acts as the Electrophile. Glutamate 170 serves as the catalytic Proton acceptor. Substrate-binding positions include glycine 176, serine 215, and 236–237; that span reads GG.

It belongs to the triosephosphate isomerase family. In terms of assembly, homodimer.

It localises to the cytoplasm. The catalysed reaction is D-glyceraldehyde 3-phosphate = dihydroxyacetone phosphate. The protein operates within carbohydrate biosynthesis; gluconeogenesis. Its pathway is carbohydrate degradation; glycolysis; D-glyceraldehyde 3-phosphate from glycerone phosphate: step 1/1. Functionally, involved in the gluconeogenesis. Catalyzes stereospecifically the conversion of dihydroxyacetone phosphate (DHAP) to D-glyceraldehyde-3-phosphate (G3P). The sequence is that of Triosephosphate isomerase from Buchnera aphidicola subsp. Cinara cedri (strain Cc).